The following is a 151-amino-acid chain: 3-hydroxyacyl-[acyl-carrier-protein] dehydratase FabZ (151 aa).

Residue histidine 56 is part of the active site.

Belongs to the thioester dehydratase family. FabZ subfamily.

The protein localises to the cytoplasm. The catalysed reaction is a (3R)-hydroxyacyl-[ACP] = a (2E)-enoyl-[ACP] + H2O. Involved in unsaturated fatty acids biosynthesis. Catalyzes the dehydration of short chain beta-hydroxyacyl-ACPs and long chain saturated and unsaturated beta-hydroxyacyl-ACPs. This Rhodopseudomonas palustris (strain HaA2) protein is 3-hydroxyacyl-[acyl-carrier-protein] dehydratase FabZ.